Reading from the N-terminus, the 299-residue chain is Oxygen-dependent coproporphyrinogen-III oxidase (299 aa).

Residue serine 92 coordinates substrate. A divalent metal cation is bound by residues histidine 96 and histidine 106. Histidine 106 acts as the Proton donor in catalysis. 108–110 (NVR) contributes to the substrate binding site. A divalent metal cation-binding residues include histidine 145 and histidine 175. Residues 239–274 (YVEFNLVYDRGTLFGLQSGGRAESILMSLPPRVRWE) form an important for dimerization region. Position 257–259 (257–259 (GGR)) interacts with substrate.

It belongs to the aerobic coproporphyrinogen-III oxidase family. As to quaternary structure, homodimer. The cofactor is a divalent metal cation.

The protein localises to the cytoplasm. It carries out the reaction coproporphyrinogen III + O2 + 2 H(+) = protoporphyrinogen IX + 2 CO2 + 2 H2O. Its pathway is porphyrin-containing compound metabolism; protoporphyrin-IX biosynthesis; protoporphyrinogen-IX from coproporphyrinogen-III (O2 route): step 1/1. Its function is as follows. Involved in the heme biosynthesis. Catalyzes the aerobic oxidative decarboxylation of propionate groups of rings A and B of coproporphyrinogen-III to yield the vinyl groups in protoporphyrinogen-IX. This chain is Oxygen-dependent coproporphyrinogen-III oxidase, found in Xanthomonas euvesicatoria pv. vesicatoria (strain 85-10) (Xanthomonas campestris pv. vesicatoria).